The chain runs to 122 residues: MSNIYANSYLIIFVFLCLGVLLPIGALTAGRWLRPHVPSDAKATTYESGNNPFHDSRVQFQVRYYLFALLFVIFDIETVFLYPWAVVYDQLGLFALVEMIIFIVLLAIGLIYAWKKKVLRWM.

Transmembrane regions (helical) follow at residues 10–30 (LIIFVFLCLGVLLPIGALTAG), 67–87 (FALLFVIFDIETVFLYPWAVV), and 91–111 (LGLFALVEMIIFIVLLAIGLI).

It belongs to the complex I subunit 3 family. In terms of assembly, NDH-1 is composed of 14 different subunits. Subunits NuoA, H, J, K, L, M, N constitute the membrane sector of the complex.

It localises to the cell membrane. It catalyses the reaction a quinone + NADH + 5 H(+)(in) = a quinol + NAD(+) + 4 H(+)(out). In terms of biological role, NDH-1 shuttles electrons from NADH, via FMN and iron-sulfur (Fe-S) centers, to quinones in the respiratory chain. The immediate electron acceptor for the enzyme in this species is believed to be a menaquinone. Couples the redox reaction to proton translocation (for every two electrons transferred, four hydrogen ions are translocated across the cytoplasmic membrane), and thus conserves the redox energy in a proton gradient. The protein is NADH-quinone oxidoreductase subunit A of Geobacillus kaustophilus (strain HTA426).